A 247-amino-acid chain; its full sequence is Osmotin-like protein OSML81 (247 aa).

A signal peptide spans 1–21; the sequence is MGYLRSSFIFSLLAFVTYTYA. 8 cysteine pairs are disulfide-bonded: Cys-30–Cys-225, Cys-72–Cys-82, Cys-87–Cys-93, Cys-141–Cys-213, Cys-146–Cys-196, Cys-154–Cys-164, Cys-168–Cys-177, and Cys-178–Cys-183.

This sequence belongs to the thaumatin family.

This is Osmotin-like protein OSML81 from Solanum commersonii (Commerson's wild potato).